The chain runs to 427 residues: Trigger factor (427 aa).

Positions 160–240 constitute a PPIase FKBP-type domain; sequence GDTLIGDVTK…VKEVKRLELP (81 aa).

Belongs to the FKBP-type PPIase family. Tig subfamily.

It is found in the cytoplasm. The catalysed reaction is [protein]-peptidylproline (omega=180) = [protein]-peptidylproline (omega=0). Its function is as follows. Involved in protein export. Acts as a chaperone by maintaining the newly synthesized protein in an open conformation. Functions as a peptidyl-prolyl cis-trans isomerase. The protein is Trigger factor of Chlorobaculum parvum (strain DSM 263 / NCIMB 8327) (Chlorobium vibrioforme subsp. thiosulfatophilum).